Consider the following 102-residue polypeptide: YcgL domain-containing protein MS1047 (102 aa).

A YcgL domain is found at 1–85; sequence MLCAIYKSKK…KQESLFEQFK (85 aa).

The chain is YcgL domain-containing protein MS1047 from Mannheimia succiniciproducens (strain KCTC 0769BP / MBEL55E).